Here is a 371-residue protein sequence, read N- to C-terminus: Cytochrome b (371 aa).

A run of 4 helical transmembrane segments spans residues 25-45, 69-90, 105-125, and 170-190; these read FGSM…FLAV, WMMQ…YIHI, WMSG…GYVL, and FFAL…LHVI. Residues histidine 75 and histidine 89 each coordinate heme b. Residues histidine 174 and histidine 188 each coordinate heme b. Histidine 193 serves as a coordination point for a ubiquinone. Helical transmembrane passes span 218 to 238, 280 to 300, 312 to 332, and 339 to 358; these read YKDF…VSFF, LGGA…PFTH, LYQL…WAAT, and FITI…ISIP.

This sequence belongs to the cytochrome b family. The cytochrome bc1 complex contains 3 respiratory subunits (MT-CYB, CYC1 and UQCRFS1), 2 core proteins (UQCRC1 and UQCRC2) and probably 6 low-molecular weight proteins. Heme b serves as cofactor.

The protein resides in the mitochondrion inner membrane. Functionally, component of the ubiquinol-cytochrome c reductase complex (complex III or cytochrome b-c1 complex) that is part of the mitochondrial respiratory chain. The b-c1 complex mediates electron transfer from ubiquinol to cytochrome c. Contributes to the generation of a proton gradient across the mitochondrial membrane that is then used for ATP synthesis. The polypeptide is Cytochrome b (MT-CYB) (Malayopython reticulatus (Reticulate python)).